The primary structure comprises 295 residues: 4-diphosphocytidyl-2-C-methyl-D-erythritol kinase (295 aa).

Lys15 is a catalytic residue. 101 to 111 (PIAAGLGGGSS) lines the ATP pocket. Asp143 is a catalytic residue.

The protein belongs to the GHMP kinase family. IspE subfamily.

It carries out the reaction 4-CDP-2-C-methyl-D-erythritol + ATP = 4-CDP-2-C-methyl-D-erythritol 2-phosphate + ADP + H(+). It participates in isoprenoid biosynthesis; isopentenyl diphosphate biosynthesis via DXP pathway; isopentenyl diphosphate from 1-deoxy-D-xylulose 5-phosphate: step 3/6. Functionally, catalyzes the phosphorylation of the position 2 hydroxy group of 4-diphosphocytidyl-2C-methyl-D-erythritol. This is 4-diphosphocytidyl-2-C-methyl-D-erythritol kinase from Caulobacter vibrioides (strain ATCC 19089 / CIP 103742 / CB 15) (Caulobacter crescentus).